Here is a 339-residue protein sequence, read N- to C-terminus: Delta(9)-fatty-acid desaturase fat-6 (339 aa).

4 helical membrane-spanning segments follow: residues 52 to 72, 77 to 97, 195 to 215, and 219 to 241; these read VALFAALHFAAAIGLYQLIFE, TVIFTFLLYVFGGFGITAGAH, YFPLVILCCFILPTIIPVYFW, and AFIAFYTAGTFRYCFTLHATWCI.

It belongs to the fatty acid desaturase type 1 family. As to expression, expressed in the intestine in adult worms and in all four larval stages. Additional expression in the hypodermis in all life stages.

The protein resides in the membrane. It carries out the reaction octadecanoyl-CoA + 2 Fe(II)-[cytochrome b5] + O2 + 2 H(+) = (9Z)-octadecenoyl-CoA + 2 Fe(III)-[cytochrome b5] + 2 H2O. The catalysed reaction is hexadecanoyl-CoA + 2 Fe(II)-[cytochrome b5] + O2 + 2 H(+) = (9Z)-hexadecenoyl-CoA + 2 Fe(III)-[cytochrome b5] + 2 H2O. The enzyme catalyses heptadecanoyl-CoA + 2 Fe(II)-[cytochrome b5] + O2 + 2 H(+) = (9Z)-heptadecenoyl-CoA + 2 Fe(III)-[cytochrome b5] + 2 H2O. It catalyses the reaction (11E)-octadecenoyl-CoA + 2 Fe(II)-[cytochrome b5] + O2 + 2 H(+) = (9Z,11E)-octadecadienoyl-CoA + 2 Fe(III)-[cytochrome b5] + 2 H2O. The protein operates within lipid metabolism; monounsaturated fatty acid biosynthesis. It participates in lipid metabolism; fatty acid metabolism. Its function is as follows. Delta(9)-fatty acid desaturase that acts preferentially on stearoyl-CoA (octadecanoyl-CoA) producing the monounsaturated oleoyl-CoA ((9Z)-octadecenoyl-CoA), one of the most abundant monounsaturated fatty acid in Caenorhabditis elegans phospholipids and triacylglycerols. Also acts on palmitoyl-CoA (hexadecanoyl-CoA), heptadecanoyl-CoA and (11E)-octadecenoyl-CoA (trans-vaccenoyl-CoA), the monounsaturated fatty acids (MUFAs) produced are further used as substrates to synthesize polyunsaturated fatty acids (PUFAs) by several other desaturases and elongases. Unlike plants, Caenorhabditis elegans desaturases seem to use fatty acyl-CoAs as substrates. This Caenorhabditis elegans protein is Delta(9)-fatty-acid desaturase fat-6 (fat-6).